The primary structure comprises 302 residues: Enolase-phosphatase E1 (302 aa).

Basic residues predominate over residues methionine 1–glutamine 10. The disordered stretch occupies residues methionine 1–histidine 25. The segment covering aspartate 16 to histidine 25 has biased composition (basic and acidic residues). Residues aspartate 40 and glutamate 42 each coordinate Mg(2+). Residues serine 183 to serine 184 and lysine 217 contribute to the substrate site. Position 242 (aspartate 242) interacts with Mg(2+).

Belongs to the HAD-like hydrolase superfamily. MasA/MtnC family. Monomer. Requires Mg(2+) as cofactor.

The protein resides in the cytoplasm. It localises to the nucleus. It catalyses the reaction 5-methylsulfanyl-2,3-dioxopentyl phosphate + H2O = 1,2-dihydroxy-5-(methylsulfanyl)pent-1-en-3-one + phosphate. The protein operates within amino-acid biosynthesis; L-methionine biosynthesis via salvage pathway; L-methionine from S-methyl-5-thio-alpha-D-ribose 1-phosphate: step 3/6. It functions in the pathway amino-acid biosynthesis; L-methionine biosynthesis via salvage pathway; L-methionine from S-methyl-5-thio-alpha-D-ribose 1-phosphate: step 4/6. Bifunctional enzyme that catalyzes the enolization of 2,3-diketo-5-methylthiopentyl-1-phosphate (DK-MTP-1-P) into the intermediate 2-hydroxy-3-keto-5-methylthiopentenyl-1-phosphate (HK-MTPenyl-1-P), which is then dephosphorylated to form the acireductone 1,2-dihydroxy-3-keto-5-methylthiopentene (DHK-MTPene). The chain is Enolase-phosphatase E1 from Branchiostoma floridae (Florida lancelet).